A 346-amino-acid polypeptide reads, in one-letter code: Zinc-type alcohol dehydrogenase-like protein C1773.06c (346 aa).

This sequence belongs to the zinc-containing alcohol dehydrogenase family. Quinone oxidoreductase subfamily.

It localises to the cytoplasm. The polypeptide is Zinc-type alcohol dehydrogenase-like protein C1773.06c (Schizosaccharomyces pombe (strain 972 / ATCC 24843) (Fission yeast)).